We begin with the raw amino-acid sequence, 875 residues long: Neurotrypsin (875 aa).

Positions 1–20 are cleaved as a signal peptide; it reads MTLARFVLALMLGALPEVVG. Asparagine 26 is a glycosylation site (N-linked (GlcNAc...) asparagine). Positions 29 to 88 are disordered; the sequence is LHHSHRHSPPAGPHYPYYLPTQQRPPRTRPPPPLPRFPRPPRALPAQRPHALQAGHTPRP. Pro residues predominate over residues 56 to 71; sequence TRPPPPLPRFPRPPRA. The region spanning 93-165 is the Kringle domain; it reads CPAGEPWVSV…GKVDWGYCDC (73 aa). Intrachain disulfides connect cysteine 93–cysteine 165, cysteine 109–cysteine 149, cysteine 138–cysteine 163, cysteine 195–cysteine 259, cysteine 208–cysteine 269, cysteine 239–cysteine 249, cysteine 305–cysteine 369, cysteine 318–cysteine 379, cysteine 349–cysteine 359, cysteine 412–cysteine 475, cysteine 425–cysteine 485, cysteine 455–cysteine 465, cysteine 525–cysteine 589, cysteine 538–cysteine 599, cysteine 569–cysteine 579, cysteine 619–cysteine 750, cysteine 661–cysteine 677, cysteine 765–cysteine 831, cysteine 794–cysteine 808, and cysteine 821–cysteine 850. SRCR domains lie at 170–271, 280–381, 387–487, and 500–601; these read VRLR…TCSF, IRLA…SCTP, IRLA…ACYP, and VRLM…ICDY. A zymogen activation region region spans residues 619 to 630; sequence CGLRLLHRRQKR. A Peptidase S1 domain is found at 631–874; it reads IIGGKNSLRG…FVPWIKSVTK (244 aa). Histidine 676 (charge relay system) is an active-site residue. An N-linked (GlcNAc...) asparagine glycan is attached at asparagine 683. Aspartate 726 (charge relay system) is an active-site residue. Catalysis depends on serine 825, which acts as the Charge relay system.

The protein belongs to the peptidase S1 family. In terms of tissue distribution, brain and Leydig cells of the testis.

Its subcellular location is the secreted. In terms of biological role, plays a role in neuronal plasticity and the proteolytic action may subserve structural reorganizations associated with learning and memory operations. The sequence is that of Neurotrypsin (PRSS12) from Homo sapiens (Human).